The primary structure comprises 645 residues: ATP-dependent zinc metalloprotease FtsH 3 (645 aa).

Residues 1 to 11 (MQNKRNQSRVL) lie on the Cytoplasmic side of the membrane. A helical transmembrane segment spans residues 12-32 (WLLLIYITIGIFIYVGVNSLI). Topologically, residues 33-110 (GTPDVSKIEY…YVRSLENSWW (78 aa)) are periplasmic. A helical membrane pass occupies residues 111 to 131 (ISILTFLLPVFLLIFLFTFLF). Topologically, residues 132-645 (RSSGGGANQG…ENNLIERKGI (514 aa)) are cytoplasmic. 202–209 (GEPGTGKT) is a binding site for ATP. His424 lines the Zn(2+) pocket. The active site involves Glu425. Residues His428 and Asp501 each contribute to the Zn(2+) site.

In the central section; belongs to the AAA ATPase family. This sequence in the C-terminal section; belongs to the peptidase M41 family. Homohexamer. The cofactor is Zn(2+).

It localises to the cell inner membrane. In terms of biological role, acts as a processive, ATP-dependent zinc metallopeptidase for both cytoplasmic and membrane proteins. Plays a role in the quality control of integral membrane proteins. The polypeptide is ATP-dependent zinc metalloprotease FtsH 3 (Petrotoga mobilis (strain DSM 10674 / SJ95)).